Here is a 326-residue protein sequence, read N- to C-terminus: MSKSNQKIASIEQLSNNEGIISALAFDQRGALKRMMAKHQTEEPTVAQIEQLKVLVAEELTQYASSILLDPEYGLPASDARNKDCGLLLAYEKTGYDVNAKGRLPDCLVQWSAKRLKEQGANAVKFLLYYDVDDAEEINIQKKAYIERIGSECVAEDIPFFLEVLTYDDNIPDNGSVEFAKVKPRKVNEAMKLFSEPRFNVDVLKVEVPVNMKYVEGFAEGEVVYTKEEAAQHFKNQDAATHLPYIYLSAGVSAELFQETLKFAHEAGAKFNGVLCGRATWSGAVQVYIEQGEDAAREWLRTTGFKNIDDLNKVLKDTATSWKQRK.

Belongs to the aldolase LacD family.

The catalysed reaction is D-tagatofuranose 1,6-bisphosphate = D-glyceraldehyde 3-phosphate + dihydroxyacetone phosphate. It participates in carbohydrate metabolism; D-tagatose 6-phosphate degradation; D-glyceraldehyde 3-phosphate and glycerone phosphate from D-tagatose 6-phosphate: step 2/2. The chain is Tagatose 1,6-diphosphate aldolase from Staphylococcus aureus (strain MW2).